We begin with the raw amino-acid sequence, 507 residues long: Glutamate--tRNA ligase (507 aa).

The 'HIGH' region motif lies at 14-24 (PSPTGPLHIGG). A 'KMSKS' region motif is present at residues 262 to 266 (KLSKR). ATP is bound at residue Lys-265.

The protein belongs to the class-I aminoacyl-tRNA synthetase family. Glutamate--tRNA ligase type 1 subfamily. In terms of assembly, monomer.

It is found in the cytoplasm. It carries out the reaction tRNA(Glu) + L-glutamate + ATP = L-glutamyl-tRNA(Glu) + AMP + diphosphate. In terms of biological role, catalyzes the attachment of glutamate to tRNA(Glu) in a two-step reaction: glutamate is first activated by ATP to form Glu-AMP and then transferred to the acceptor end of tRNA(Glu). The sequence is that of Glutamate--tRNA ligase from Porphyromonas gingivalis (strain ATCC 33277 / DSM 20709 / CIP 103683 / JCM 12257 / NCTC 11834 / 2561).